The chain runs to 448 residues: Trigger factor (448 aa).

Residues 172–257 enclose the PPIase FKBP-type domain; the sequence is GDRVTVDFVG…MKKIEWPHLP (86 aa).

Belongs to the FKBP-type PPIase family. Tig subfamily.

It is found in the cytoplasm. The enzyme catalyses [protein]-peptidylproline (omega=180) = [protein]-peptidylproline (omega=0). Functionally, involved in protein export. Acts as a chaperone by maintaining the newly synthesized protein in an open conformation. Functions as a peptidyl-prolyl cis-trans isomerase. The polypeptide is Trigger factor (Paraburkholderia xenovorans (strain LB400)).